Here is a 682-residue protein sequence, read N- to C-terminus: Potassium-transporting ATPase ATP-binding subunit (682 aa).

Helical transmembrane passes span 34 to 54, 58 to 78, 219 to 239, and 254 to 274; these read PVMF…LAMV, IAGS…TVLF, IALT…TATL, and VLVA…LSAI. The active-site 4-aspartylphosphate intermediate is aspartate 307. ATP is bound by residues aspartate 344, glutamate 348, 377-384, and lysine 395; that span reads FTAQSRMS. The Mg(2+) site is built by aspartate 518 and aspartate 522. A run of 3 helical transmembrane segments spans residues 588 to 608, 616 to 636, and 662 to 682; these read FAII…LNVM, AILS…PLAL, and LLVP…LGLA.

Belongs to the cation transport ATPase (P-type) (TC 3.A.3) family. Type IA subfamily. The system is composed of three essential subunits: KdpA, KdpB and KdpC.

It localises to the cell inner membrane. It carries out the reaction K(+)(out) + ATP + H2O = K(+)(in) + ADP + phosphate + H(+). In terms of biological role, part of the high-affinity ATP-driven potassium transport (or Kdp) system, which catalyzes the hydrolysis of ATP coupled with the electrogenic transport of potassium into the cytoplasm. This subunit is responsible for energy coupling to the transport system and for the release of the potassium ions to the cytoplasm. The polypeptide is Potassium-transporting ATPase ATP-binding subunit (Salmonella dublin (strain CT_02021853)).